We begin with the raw amino-acid sequence, 104 residues long: Protein RnfH (104 aa).

It belongs to the UPF0125 (RnfH) family.

The protein is Protein RnfH of Pseudomonas fluorescens (strain Pf0-1).